The chain runs to 618 residues: 1-deoxy-D-xylulose-5-phosphate synthase (618 aa).

Thiamine diphosphate-binding positions include H72 and 113–115 (GHA). D144 contacts Mg(2+). Thiamine diphosphate is bound by residues 145 to 146 (GA), N173, H284, and E359. N173 serves as a coordination point for Mg(2+).

This sequence belongs to the transketolase family. DXPS subfamily. Homodimer. Mg(2+) is required as a cofactor. Thiamine diphosphate serves as cofactor.

The enzyme catalyses D-glyceraldehyde 3-phosphate + pyruvate + H(+) = 1-deoxy-D-xylulose 5-phosphate + CO2. It functions in the pathway metabolic intermediate biosynthesis; 1-deoxy-D-xylulose 5-phosphate biosynthesis; 1-deoxy-D-xylulose 5-phosphate from D-glyceraldehyde 3-phosphate and pyruvate: step 1/1. Functionally, catalyzes the acyloin condensation reaction between C atoms 2 and 3 of pyruvate and glyceraldehyde 3-phosphate to yield 1-deoxy-D-xylulose-5-phosphate (DXP). This Dictyoglomus turgidum (strain DSM 6724 / Z-1310) protein is 1-deoxy-D-xylulose-5-phosphate synthase.